The following is a 79-amino-acid chain: uncharacterized protein (79 aa).

Positions 10–60 constitute a SpoVT-AbrB domain; the sequence is EAVLTMDSKGQILLPKELRERAGLKAGDRLVAIAGCDENEEVCCLILVKAE.

This is an uncharacterized protein from Archaeoglobus fulgidus (strain ATCC 49558 / DSM 4304 / JCM 9628 / NBRC 100126 / VC-16).